A 395-amino-acid polypeptide reads, in one-letter code: Beta-1,4-galactosyltransferase 3 (395 aa).

At 1-10 (MLRRLLERPC) the chain is on the cytoplasmic side. Residues 11-31 (TLALLVGSQLAVMMYLSLGGF) traverse the membrane as a helical; Signal-anchor for type II membrane protein segment. Topologically, residues 32–395 (RSLSALFGRD…ANHTAPHGSH (364 aa)) are lumenal. N-linked (GlcNAc...) asparagine glycosylation occurs at Asn57. A disulfide bridge connects residues Cys79 and Cys121. UDP-alpha-D-galactose is bound at residue 132-136 (PHRAR). Asn168 carries N-linked (GlcNAc...) asparagine glycosylation. Residues 171–173 (FNR), 198–199 (VD), Tyr228, and Trp260 each bind UDP-alpha-D-galactose. A disulfide bridge links Cys192 with Cys211. A Mn(2+)-binding site is contributed by Asp199. 262 to 265 (GEDD) is a binding site for N-acetyl-D-glucosamine. His293 contacts Mn(2+). UDP-alpha-D-galactose is bound at residue 293-295 (HRG). An N-acetyl-D-glucosamine-binding site is contributed by Arg305. N-linked (GlcNAc...) asparagine glycans are attached at residues Asn339 and Asn387. The segment at 341 to 395 (TADIGTDPRGPRAPSGPRYPPGSSQAFRQEMLQRRPPARPGPLPTANHTAPHGSH) is disordered.

The protein belongs to the glycosyltransferase 7 family. Requires Mn(2+) as cofactor.

The protein resides in the golgi apparatus. It localises to the golgi stack membrane. It catalyses the reaction an N-acetyl-beta-D-glucosaminyl derivative + UDP-alpha-D-galactose = a beta-D-galactosyl-(1-&gt;4)-N-acetyl-beta-D-glucosaminyl derivative + UDP + H(+). The enzyme catalyses N-acetyl-D-glucosamine + UDP-alpha-D-galactose = beta-D-galactosyl-(1-&gt;4)-N-acetyl-D-glucosamine + UDP + H(+). It carries out the reaction a beta-D-GlcNAc-(1-&gt;3)-beta-D-Gal-(1-&gt;4)-beta-D-Glc-(1&lt;-&gt;1)-Cer(d18:1(4E)) + UDP-alpha-D-galactose = a neolactoside nLc4Cer(d18:1(4E)) + UDP + H(+). The catalysed reaction is a beta-D-glucosylceramide + UDP-alpha-D-galactose = a beta-D-galactosyl-(1-&gt;4)-beta-D-glucosyl-(1&lt;-&gt;1)-ceramide + UDP + H(+). It catalyses the reaction a neolactoside IV(3)-beta-GlcNAc-nLc4Cer + UDP-alpha-D-galactose = a neolactoside nLc6Cer + UDP + H(+). It participates in protein modification; protein glycosylation. In terms of biological role, responsible for the synthesis of complex-type N-linked oligosaccharides in many glycoproteins as well as the carbohydrate moieties of glycolipids. In Rattus norvegicus (Rat), this protein is Beta-1,4-galactosyltransferase 3.